An 82-amino-acid polypeptide reads, in one-letter code: Large ribosomal subunit protein bL31B (82 aa).

It belongs to the bacterial ribosomal protein bL31 family. Type B subfamily. Part of the 50S ribosomal subunit.

The chain is Large ribosomal subunit protein bL31B from Amoebophilus asiaticus (strain 5a2).